The chain runs to 341 residues: Serine/threonine-protein kinase PDIK1L (341 aa).

The 327-residue stretch at 8–334 (YDLIREVGRG…LELRLVQIAF (327 aa)) folds into the Protein kinase domain. ATP-binding positions include 14–22 (VGRGSYGVV) and K37. Catalysis depends on D164, which acts as the Proton acceptor.

Belongs to the protein kinase superfamily. Ser/Thr protein kinase family.

The protein resides in the nucleus. The enzyme catalyses L-seryl-[protein] + ATP = O-phospho-L-seryl-[protein] + ADP + H(+). It carries out the reaction L-threonyl-[protein] + ATP = O-phospho-L-threonyl-[protein] + ADP + H(+). This Mus musculus (Mouse) protein is Serine/threonine-protein kinase PDIK1L (Pdik1l).